The following is a 979-amino-acid chain: Peptidyl-glycine alpha-amidating monooxygenase (979 aa).

Residues 1 to 24 (MAGRARSRLLLLLGLLALQSSCLA) form the signal peptide. The tract at residues 1 to 497 (MAGRARSRLL…EGPWEPELAG (497 aa)) is peptidylglycine alpha-hydroxylating monooxygenase. Positions 25-34 (FRSPLSVFKR) are excised as a propeptide. The Intragranular portion of the chain corresponds to 35-869 (FKETTRSFSN…KKLIKDPGSG (835 aa)). 5 disulfide bridges follow: Cys-46–Cys-185, Cys-80–Cys-125, Cys-113–Cys-130, Cys-226–Cys-333, and Cys-292–Cys-314. Residues His-106 and His-107 each contribute to the Cu(2+) site. Cu(2+)-binding residues include His-171, His-241, His-243, and Met-313. The segment at 498-823 (DFHVEEALEW…SRLEVEHRSV (326 aa)) is peptidyl-alpha-hydroxyglycine alpha-amidating lyase. NHL repeat units lie at residues 501 to 544 (VEEA…NSFD), 570 to 611 (AEIL…LEPR), 620 to 665 (LGRS…FSPS), and 673 to 717 (GEES…FKTD). Val-520 is a Ca(2+) binding site. Arg-533 contacts a protein. His-585 is a Zn(2+) binding site. Leu-587 contacts Ca(2+). Residues Cys-634 and Cys-655 are joined by a disulfide bond. An a protein-binding site is contributed by Tyr-654. A Zn(2+)-binding site is contributed by His-690. A disulfide bridge links Cys-702 with Cys-713. Arg-706 is an a protein binding site. Asn-765 is a glycosylation site (N-linked (GlcNAc...) asparagine). An NHL 5 repeat occupies 769-812 (GEIIDVFKPVRKHFDMPHDIVASEDGTVYIGDAHTNTVWKFTLT). His-786 is a binding site for Zn(2+). A Ca(2+)-binding site is contributed by Asp-787. The chain crosses the membrane as a helical span at residues 870–893 (VPVVLITTLLVIPVVVLLAIAMFI). At 894–979 (RWKKSRAFGD…APLPTPAPSS (86 aa)) the chain is on the cytoplasmic side. Phosphoserine is present on residues Ser-924, Ser-925, Ser-935, and Ser-948. The segment at 931–948 (NFFASRKGYSRKGFDRVS) is interaction with RASSF9. The segment at 943-979 (GFDRVSTEGSDQEKDEDDGSESEEEYSAPLPTPAPSS) is disordered. At Thr-949 the chain carries Phosphothreonine. Phosphoserine; by UHMK1 is present on Ser-952. Residues 955-968 (EKDEDDGSESEEEY) are compositionally biased toward acidic residues. Phosphoserine is present on Ser-964.

In the C-terminal section; belongs to the peptidyl-alpha-hydroxyglycine alpha-amidating lyase family. The protein in the N-terminal section; belongs to the copper type II ascorbate-dependent monooxygenase family. In terms of assembly, monomer. Interacts with RASSF9. Requires Zn(2+) as cofactor. Cu(2+) serves as cofactor.

It is found in the cytoplasmic vesicle. The protein resides in the secretory vesicle membrane. It catalyses the reaction a [peptide]-C-terminal glycine + 2 L-ascorbate + O2 = a [peptide]-C-terminal (2S)-2-hydroxyglycine + 2 monodehydro-L-ascorbate radical + H2O. It carries out the reaction a [peptide]-C-terminal (2S)-2-hydroxyglycine = a [peptide]-C-terminal amide + glyoxylate. The enzyme catalyses N-dodecanoylglycine + 2 L-ascorbate + O2 = N-dodecanoyl-(2S)-hydroxyglycine + 2 monodehydro-L-ascorbate radical + H2O. The catalysed reaction is N-dodecanoyl-(2S)-hydroxyglycine = dodecanamide + glyoxylate. It catalyses the reaction N-(9Z,12Z,15Z)-octadecatrienoylglycine + 2 L-ascorbate + O2 = N-(9Z,12Z,15Z)-octadecatrienoyl-(2S)-hydroxyglycine + 2 monodehydro-L-ascorbate radical + H2O. It carries out the reaction N-(9Z,12Z,15Z)-octadecatrienoyl-(2S)-hydroxyglycine = (9Z,12Z,15Z)-octadecatrienamide + glyoxylate. The enzyme catalyses N-(9Z-octadecenoyl)glycine + 2 L-ascorbate + O2 = N-(9Z-octadecenoyl)-(2S)-hydroxyglycine + 2 monodehydro-L-ascorbate radical + H2O. The catalysed reaction is N-(9Z-octadecenoyl)-(2S)-hydroxyglycine = (9Z)-octadecenamide + glyoxylate. It catalyses the reaction N-tetradecanoylglycine + 2 L-ascorbate + O2 = N-tetradecanoyl-(2S)-hydroxyglycine + 2 monodehydro-L-ascorbate radical + H2O. It carries out the reaction N-tetradecanoyl-(2S)-hydroxyglycine = tetradecamide + glyoxylate. The enzyme catalyses N-decanoylglycine + 2 L-ascorbate + O2 = N-decanoyl-(2S)-hydroxyglycine + 2 monodehydro-L-ascorbate radical + H2O. The catalysed reaction is N-decanoyl-(2S)-hydroxyglycine = decanamide + glyoxylate. It catalyses the reaction N-octanoylglycine + 2 L-ascorbate + O2 = N-octanoyl-(2S)-hydroxyglycine + 2 monodehydro-L-ascorbate radical + H2O. It carries out the reaction N-octanoyl-(2S)-hydroxyglycine = octanamide + glyoxylate. Its activity is regulated as follows. PAM activity is inhibited by EDTA, phenylglyoxal and diethyl pyrocarbonate. PAL activity is stimulated by cadmium and inhibited by mercury. Its function is as follows. Bifunctional enzyme that catalyzes amidation of the C-terminus of proteins. Alpha-amidation is present at the C-terminus of many endocrine hormones and neuropeptides and is required for their activity. C-terminal amidation also takes place in response to protein fragmentation triggered by oxidative stress, promoting degradation of amidated protein fragments by the proteasome. Alpha-amidation involves two sequential reactions, both of which are catalyzed by separate catalytic domains of the enzyme. The first step, catalyzed by peptidyl alpha-hydroxylating monooxygenase (PHM) domain, is the copper-, ascorbate-, and O2- dependent stereospecific hydroxylation (with S stereochemistry) at the alpha-carbon (C-alpha) of the C-terminal glycine of the peptidylglycine substrate. The second step, catalyzed by the peptidylglycine amidoglycolate lyase (PAL) domain, is the zinc-dependent cleavage of the N-C-alpha bond, producing the alpha-amidated peptide and glyoxylate. Similarly, catalyzes the two-step conversion of an N-fatty acylglycine to a primary fatty acid amide and glyoxylate. The chain is Peptidyl-glycine alpha-amidating monooxygenase from Mus musculus (Mouse).